We begin with the raw amino-acid sequence, 3149 residues long: Large tegument protein deneddylase (3149 aa).

Positions 1–13 are enriched in polar residues; sequence MSNGDWGQSQRTR. The disordered stretch occupies residues 1–30; it reads MSNGDWGQSQRTRGTGPVRGIRTMDVNAPG. Residues 1 to 268 are deubiquitination activity; the sequence is MSNGDWGQSQ…YEANGSGFDL (268 aa). Residues 41-258 form the Peptidase C76 domain; it reads LGTASCNQAH…MLEHYGVYDF (218 aa). Catalysis depends on residues C61, D193, and H195. Residues 319 to 341 are disordered; sequence PAARYSPAKTNSPPSSPASAAPA. Repeat copies occupy residues 335 to 339, 340 to 344, 345 to 349, 350 to 354, 355 to 359, 360 to 364, 365 to 369, and 370 to 374. Residues 335 to 374 form an 8 X 5 AA repeats of P-A-S-A-A region; the sequence is PASAAPASAAPASAAPASAAPASAAPASAAPASAAPASAA. 8 disordered regions span residues 382 to 656, 901 to 923, 1143 to 1166, 1412 to 1434, 1644 to 1677, 2583 to 2839, 2852 to 2981, and 2995 to 3019; these read FIPI…GSGL, LLSGGDQEAGEGGGEPEDNSIYR, APISPASPSATPANHDNPEATPPL, GRKEKEKLREQEDKERQERRARE, PEATNDPGQANLPPPPTIPQATAPPRLASDSALW, GLVS…PTAV, AAAS…PGAR, and QTYTVRKEAPPSAASQLPKMPKCKD. Pro residues predominate over residues 462–483; that stretch reads LPPPVIPIPHQSPPASPTPHPA. Composition is skewed to low complexity over residues 509 to 536 and 544 to 564; these read AAPSNPKIPLTTPSPSPTAAAAPTTTTL and QPPQSAAPAPSPLLPQQQPTP. Residues 554 to 584 form an interaction with inner tegument protein region; the sequence is SPLLPQQQPTPSAAPAPSPLLPQQQPPPSAA. Residues 565 to 609 are compositionally biased toward pro residues; that stretch reads SAAPAPSPLLPQQQPPPSAARAPSPLPPQQQPLPSATPAPPPAQQ. The segment covering 1143-1155 has biased composition (low complexity); that stretch reads APISPASPSATPA. Residues 2592–2603 are compositionally biased toward polar residues; the sequence is SADNTPASSDRL. A compositionally biased stretch (pro residues) spans 2711 to 2720; sequence QPAPQQPPSS. Polar residues-rich tracts occupy residues 2734–2745 and 2784–2804; these read SPHSTPSTASGS and SAASLTTFGLQPQDTQASSQD. The segment covering 2812–2827 has biased composition (basic and acidic residues); the sequence is MQREKKQQGGREEAAE. Positions 2874–2885 are enriched in low complexity; that stretch reads APALGSGLAAPA.

The protein belongs to the herpesviridae large tegument protein family. As to quaternary structure, interacts with host CUL1 and CUL4A; these interactions inhibit the E3 ligase activity of cullins. Interacts with inner tegument protein. Interacts with capsid vertex specific component CVC2. Interacts with the major capsid protein/MCP. Interacts with host TRIM25 and YWHAZ.

The protein localises to the virion tegument. Its subcellular location is the host cytoplasm. It is found in the host nucleus. The catalysed reaction is Thiol-dependent hydrolysis of ester, thioester, amide, peptide and isopeptide bonds formed by the C-terminal Gly of ubiquitin (a 76-residue protein attached to proteins as an intracellular targeting signal).. In terms of biological role, large tegument protein that plays multiple roles in the viral cycle. During viral entry, remains associated with the capsid while most of the tegument is detached and participates in the capsid transport toward the host nucleus. Plays a role in the routing of the capsid at the nuclear pore complex and subsequent uncoating. Within the host nucleus, acts as a deneddylase and promotes the degradation of nuclear CRLs (cullin-RING ubiquitin ligases) and thereby stabilizes nuclear CRL substrates, while cytoplasmic CRLs remain unaffected. These modifications prevent host cell cycle S-phase progression and create a favorable environment allowing efficient viral genome replication. Participates later in the secondary envelopment of capsids. Indeed, plays a linker role for the association of the outer viral tegument to the capsids together with the inner tegument protein. Counteracts host TLR-mediated NF-kappa-B activation through both MYD88 and TICAM1-dependent pathways by interfering with 'Lys-63'- and 'Lys-48'-linked ubiquitination of signaling intermediates such as TRAF6 and IKBKG. Inhibits type I interferon production by forming a tri-molecular complex with host TRIM25 and 14-3-3 thereby promoting TRIM25 autoubiquitination and sequestration of the ligase into inactive protein aggregates. In turn, host RIGI is recruited to the complex but ubiquitination is severely impaired leading to inhibition of the pathway. Also catalyzes the removal of 'Lys-48'- and 'Lys-63'-linked ubiquitin chains on host TBK1 and STING1 suppressing cGAS-STING signaling in addition to the RIGI-MAVS pathway. Inhibits selective autophagy by deubiquitinating host SQSTM1. In turn, decreased SQSTM1 ubiquitination fails to recruit LC3 to SQSTM1-positive aggregates. In the host nucleus, deubiquitinates topoisomerase II subunits TOP2A and TOP2B thereby stabilizing SUMOylated TOP2 which halts the DNA damage response to TOP2-induced double strand DNA breaks and promotes cell survival. The chain is Large tegument protein deneddylase from Epstein-Barr virus (strain B95-8) (HHV-4).